Consider the following 282-residue polypeptide: tRNA pseudouridine synthase A (282 aa).

The active-site Nucleophile is Asp-61. Tyr-119 lines the substrate pocket.

This sequence belongs to the tRNA pseudouridine synthase TruA family. In terms of assembly, homodimer.

It catalyses the reaction uridine(38/39/40) in tRNA = pseudouridine(38/39/40) in tRNA. Formation of pseudouridine at positions 38, 39 and 40 in the anticodon stem and loop of transfer RNAs. The chain is tRNA pseudouridine synthase A from Nostoc sp. (strain PCC 7120 / SAG 25.82 / UTEX 2576).